A 506-amino-acid chain; its full sequence is Galactose/methyl galactoside import ATP-binding protein MglA (506 aa).

2 consecutive ABC transporter domains span residues 14–249 (LEMS…VGRS) and 264–506 (VILE…SLHL). 46-53 (GENGAGKS) serves as a coordination point for ATP.

Belongs to the ABC transporter superfamily. Galactose/methyl galactoside importer (TC 3.A.1.2.3) family. As to quaternary structure, the complex is composed of one ATP-binding protein (MglA), two transmembrane proteins (MglC) and a solute-binding protein (MglB).

Its subcellular location is the cell inner membrane. The catalysed reaction is D-galactose(out) + ATP + H2O = D-galactose(in) + ADP + phosphate + H(+). The enzyme catalyses methyl beta-D-galactoside(out) + ATP + H2O = methyl beta-D-galactoside(in) + ADP + phosphate + H(+). Functionally, part of the ABC transporter complex MglABC involved in galactose/methyl galactoside import. Responsible for energy coupling to the transport system. The chain is Galactose/methyl galactoside import ATP-binding protein MglA from Shigella flexneri serotype 5b (strain 8401).